Reading from the N-terminus, the 346-residue chain is Phenylalanine--tRNA ligase alpha subunit (346 aa).

Glu261 provides a ligand contact to Mg(2+).

It belongs to the class-II aminoacyl-tRNA synthetase family. Phe-tRNA synthetase alpha subunit type 1 subfamily. As to quaternary structure, tetramer of two alpha and two beta subunits. Requires Mg(2+) as cofactor.

Its subcellular location is the cytoplasm. The enzyme catalyses tRNA(Phe) + L-phenylalanine + ATP = L-phenylalanyl-tRNA(Phe) + AMP + diphosphate + H(+). The chain is Phenylalanine--tRNA ligase alpha subunit from Streptococcus agalactiae serotype Ia (strain ATCC 27591 / A909 / CDC SS700).